We begin with the raw amino-acid sequence, 701 residues long: Polyribonucleotide nucleotidyltransferase (701 aa).

Positions 483 and 489 each coordinate Mg(2+). Positions 550–609 (PRIYTLHIPTDKIRDVIGPGGKVIRGIIEQTGVKIDVEDDGTIHVASADEASANKAIQII) constitute a KH domain. An S1 motif domain is found at 619-686 (GKTYLGKVVR…EGNKIKLSRK (68 aa)).

Belongs to the polyribonucleotide nucleotidyltransferase family. Mg(2+) is required as a cofactor.

The protein localises to the cytoplasm. The enzyme catalyses RNA(n+1) + phosphate = RNA(n) + a ribonucleoside 5'-diphosphate. Functionally, involved in mRNA degradation. Catalyzes the phosphorolysis of single-stranded polyribonucleotides processively in the 3'- to 5'-direction. This is Polyribonucleotide nucleotidyltransferase from Solibacter usitatus (strain Ellin6076).